A 239-amino-acid polypeptide reads, in one-letter code: Pyridoxine 5'-phosphate synthase (239 aa).

Position 7 (N7) interacts with 3-amino-2-oxopropyl phosphate. Position 9–10 (9–10) interacts with 1-deoxy-D-xylulose 5-phosphate; it reads DH. R18 is a binding site for 3-amino-2-oxopropyl phosphate. The active-site Proton acceptor is the H43. Residues R45 and H50 each coordinate 1-deoxy-D-xylulose 5-phosphate. The active-site Proton acceptor is the E70. T100 contributes to the 1-deoxy-D-xylulose 5-phosphate binding site. The active-site Proton donor is H191. 3-amino-2-oxopropyl phosphate is bound by residues G192 and 213-214; that span reads GH.

Belongs to the PNP synthase family. Homooctamer; tetramer of dimers.

Its subcellular location is the cytoplasm. The catalysed reaction is 3-amino-2-oxopropyl phosphate + 1-deoxy-D-xylulose 5-phosphate = pyridoxine 5'-phosphate + phosphate + 2 H2O + H(+). It participates in cofactor biosynthesis; pyridoxine 5'-phosphate biosynthesis; pyridoxine 5'-phosphate from D-erythrose 4-phosphate: step 5/5. Catalyzes the complicated ring closure reaction between the two acyclic compounds 1-deoxy-D-xylulose-5-phosphate (DXP) and 3-amino-2-oxopropyl phosphate (1-amino-acetone-3-phosphate or AAP) to form pyridoxine 5'-phosphate (PNP) and inorganic phosphate. The chain is Pyridoxine 5'-phosphate synthase from Desulforapulum autotrophicum (strain ATCC 43914 / DSM 3382 / VKM B-1955 / HRM2) (Desulfobacterium autotrophicum).